The primary structure comprises 377 residues: Bradyzoite pseudokinase 1 (377 aa).

An N-terminal signal peptide occupies residues 1–26; that stretch reads MANTSVRRRQLLSSVLLLQWLTTVLG. The disordered stretch occupies residues 39–58; that stretch reads HGQFPSLRRTEGVSQSGSGH. The Protein kinase domain maps to 48-354; the sequence is TEGVSQSGSG…IEEIMKDPLF (307 aa).

This sequence belongs to the protein kinase superfamily. STE Ser/Thr protein kinase family. WNG subfamily. Forms a complex composed of BPK1, MCP4, MAG1, GRA8 and GRA9. Interacts with MCP4. Interacts with MAG1. Interacts with GRA8. Interacts with GRA9.

The protein resides in the secreted. Functionally, required for the growth, maintenance, and/or stability, and thus infectivity, of bradyzoite cysts. This is Bradyzoite pseudokinase 1 from Toxoplasma gondii.